The chain runs to 466 residues: Citrate synthase, mitochondrial (466 aa).

The N-terminal 27 residues, 1-27 (MALLTAAARLLGAKNSSCLVLAARHAS), are a transit peptide targeting the mitochondrion. Positions 2-21 (ALLTAAARLLGAKNSSCLVL) match the SIFI-degron motif. An N6-succinyllysine modification is found at lysine 57. N6-acetyllysine; alternate is present on lysine 76. Lysine 76 is subject to N6-succinyllysine; alternate. 2 positions are modified to N6-succinyllysine: lysine 103 and lysine 193. Residue serine 226 is modified to Phosphoserine. Residue histidine 301 is part of the active site. An N6-acetyllysine; alternate mark is found at lysine 321 and lysine 327. Residues lysine 321 and lysine 327 each carry the N6-succinyllysine; alternate modification. Residue histidine 347 is part of the active site. Position 356 (arginine 356) interacts with oxaloacetate. Position 375 is an N6-acetyllysine; alternate (lysine 375). The residue at position 375 (lysine 375) is an N6-succinyllysine; alternate. Position 382 is an N6-acetyllysine (lysine 382). Lysine 393 carries the post-translational modification N6-acetyllysine; alternate. Lysine 393 carries the post-translational modification N6-succinyllysine; alternate. N6,N6,N6-trimethyllysine is present on lysine 395. Aspartate 402 is an active-site residue. Oxaloacetate is bound by residues arginine 428 and arginine 448. Lysine 450 carries the post-translational modification N6-succinyllysine. Position 459 is an N6-acetyllysine; alternate (lysine 459). Lysine 459 carries the N6-succinyllysine; alternate modification.

It belongs to the citrate synthase family. As to quaternary structure, homodimer. Post-translationally, methylated. Trimethylation at Lys-395 by CSKMT decreases citrate synthase activity. In response to mitochondrial stress, the precursor protein is ubiquitinated by the SIFI complex in the cytoplasm before mitochondrial import, leading to its degradation. Within the SIFI complex, UBR4 initiates ubiquitin chain that are further elongated or branched by KCMF1. Expressed in the head region and flagellum of epididymal sperm.

The protein localises to the mitochondrion matrix. It carries out the reaction oxaloacetate + acetyl-CoA + H2O = citrate + CoA + H(+). It participates in carbohydrate metabolism; tricarboxylic acid cycle; isocitrate from oxaloacetate: step 1/2. In terms of biological role, key enzyme of the Krebs tricarboxylic acid cycle which catalyzes the synthesis of citrate from acetyl coenzyme A and oxaloacetate. The sequence is that of Citrate synthase, mitochondrial (Cs) from Rattus norvegicus (Rat).